Here is a 496-residue protein sequence, read N- to C-terminus: Transmembrane transporter swnT (496 aa).

The next 5 membrane-spanning stretches (helical) occupy residues 40–60 (LSAIGIGYGVTNTAVGIPLIL), 72–92 (VFWGFLAMAAVGLATATTLAE), 124–144 (AMISWVAAVATGSSGNLSVPL), 162–182 (WMGFAAFQAINVVTCFGACFE), and 191–211 (AFLLFNVVSVGVIIVALFAMA). N225 is a glycosylation site (N-linked (GlcNAc...) asparagine). The next 6 helical transmembrane spans lie at 270 to 290 (LLWTIFIASTSGLLVVLAVLV), 314 to 334 (AAAIGLWIPVLILVLASVWSI), 368 to 388 (PIWSLVGSAVGTALFGCLYLA), 396 to 416 (LIATGILLQYISYSIPTVLVL), 434 to 454 (GLVANFIMLAWTVVAFVFYCF), and 467 to 487 (YVSGVLVVIATFIAALWILYA).

This sequence belongs to the amino acid-polyamine-organocation (APC) superfamily. Amino acid/choline transporter (ACT) (TC 2.A.3.4) family.

It localises to the membrane. Its function is as follows. Transmembrane transporter; part of the gene cluster that mediates the biosynthesis of swainsonine, a cytotoxic fungal alkaloid and a potential cancer therapy drug. Does not mediate the secretion of SW and the exact role of swnT in SW biosynthesis remains to be determined. The chain is Transmembrane transporter swnT from Metarhizium robertsii (strain ARSEF 23 / ATCC MYA-3075) (Metarhizium anisopliae (strain ARSEF 23)).